The chain runs to 428 residues: uncharacterized protein (428 aa).

3 disordered regions span residues 1–25 (MRDN…PTRT), 157–219 (DTAK…TEQV), and 247–271 (DFGT…PWRP). Over residues 12 to 22 (GSESQQTTYDP) the composition is skewed to polar residues. A compositionally biased stretch (basic and acidic residues) spans 157-171 (DTAKSNEKLQGDESK). The segment covering 172-186 (SSNGSSSTSTTTQRG) has biased composition (low complexity). Residues 206-217 (GSQGNSGEQGTE) are compositionally biased toward polar residues.

This sequence belongs to the adhesin P1 family.

This is an uncharacterized protein from Mycoplasma pneumoniae (strain ATCC 29342 / M129 / Subtype 1) (Mycoplasmoides pneumoniae).